Consider the following 1099-residue polypeptide: Solute carrier family 12 member 1 (1099 aa).

The Cytoplasmic segment spans residues 1-177 (MSLNNSSSVF…EDNKAGAVKF (177 aa)). An RFXV motif motif is present at residues 20–23 (RFQV). A phosphoserine mark is found at serine 60 and serine 90. Threonine 94, threonine 99, threonine 104, and threonine 117 each carry phosphothreonine. Serine 119 carries the phosphoserine modification. Serine 129 carries the phosphoserine; by AMPK modification. Serine 147 bears the Phosphoserine mark. Positions 147–169 (SADRVANGEGMPGEEHAENKEED) are disordered. The span at 159–169 (GEEHAENKEED) shows a compositional bias: basic and acidic residues. A helical membrane pass occupies residues 178–198 (GWVKGVLVRCMLNIWGVMLFI). Topologically, residues 199–201 (RLS) are extracellular. A helical membrane pass occupies residues 202–222 (WIVGEAGIGLGVVIILLSTMV). The Cytoplasmic portion of the chain corresponds to 223 to 259 (TSITGLSTSAIATNGFVRGGGAYYLISRSLGPEFGGS). A helical membrane pass occupies residues 260–280 (IGLIFAFANAVAVAMYVVGFA). The Extracellular segment spans residues 281 to 302 (ETVVDLLKESDSMMVDPTNDIR). The helical transmembrane segment at 303–323 (IIGSITVVILLGISVAGMEWE) threads the bilayer. Residues 324–327 (AKAQ) lie on the Cytoplasmic side of the membrane. Residues 328 to 348 (VILLIILLIAIANFFIGTVIP) traverse the membrane as a helical segment. At 349–379 (SNNEKKSRGFFNYQASIFAENFGPSFTKGEG) the chain is on the extracellular side. Residues 380 to 400 (FFSVFAIFFPAATGILAGANI) form a helical membrane-spanning segment. Residues 401–417 (SGDLEDPQDAIPRGTML) lie on the Cytoplasmic side of the membrane. The helical transmembrane segment at 418–438 (AIFITTVAYIGVAICVGACVV) threads the bilayer. Topologically, residues 439–550 (RDATGSMNDT…NNEPLRGYIL (112 aa)) are extracellular. Residues asparagine 446 and asparagine 456 are each glycosylated (N-linked (GlcNAc...) asparagine). The next 2 membrane-spanning stretches (helical) occupy residues 551 to 571 (TFVIAMAFILIAELNTIAPII) and 572 to 592 (SNFFLASYALINFSCFHASYA). At 593 to 609 (KSPGWRPAYGIYNMWVS) the chain is on the extracellular side. Residues 610–630 (LFGAVLCCAVMFVINWWAAVI) form a helical membrane-spanning segment. Residues 631-1099 (TYVIEFFLYI…NHKNVLTFYS (469 aa)) lie on the Cytoplasmic side of the membrane.

This sequence belongs to the SLC12A transporter family. As to quaternary structure, when phosphorylated, interacts with PPP3CB. In terms of processing, phosphorylated at Ser-90, Thr-99 and Thr-104 by OXSR1/OSR1 and STK39/SPAK downstream of WNK kinases (WNK1, WNK2, WNK3 or WNK4), promoting its activity. In terms of tissue distribution, predominant in kidney. The 3 isoforms are differentially distributed within the kidney: B almost exclusively in cortex, F almost exclusively in medulla, and A about equally distributed.

The protein localises to the apical cell membrane. It catalyses the reaction K(+)(out) + 2 chloride(out) + Na(+)(out) = K(+)(in) + 2 chloride(in) + Na(+)(in). Activated following phosphorylation by OXSR1/OSR1 and STK39/SPAK downstream of WNK kinases (WNK1, WNK2, WNK3 or WNK4). In terms of biological role, renal sodium, potassium and chloride ion cotransporter that mediates the transepithelial NaCl reabsorption in the thick ascending limb and plays an essential role in the urinary concentration and volume regulation. Electrically silent transporter system. The polypeptide is Solute carrier family 12 member 1 (SLC12A1) (Oryctolagus cuniculus (Rabbit)).